Here is a 284-residue protein sequence, read N- to C-terminus: Protein phosphatase 1 regulatory subunit 3B (284 aa).

The short motif at 61–64 is the PP1-binding motif element; it reads RVSF. The CBM21 domain maps to 124 to 232; that stretch reads RNRLQTDHVC…SNKGKNYRII (109 aa). At Ser260 the chain carries Phosphoserine.

As to quaternary structure, interacts with glycogen, PPP1CC catalytic subunit of PP1 and PYGL. Associates with glycogen particles. Forms complexes with debranching enzyme, glycogen phosphorylase, glycogen synthase and phosphorylase kinase which is necessary for its regulation of PP1 activity.

In terms of biological role, acts as a glycogen-targeting subunit for phosphatase PP1. Facilitates interaction of the PP1 with enzymes of the glycogen metabolism and regulates its activity. Suppresses the rate at which PP1 dephosphorylates (inactivates) glycogen phosphorylase and enhances the rate at which it activates glycogen synthase and therefore limits glycogen breakdown. Its activity is inhibited by PYGL, resulting in inhibition of the glycogen synthase and glycogen phosphorylase phosphatase activities of PP1. Dramatically increases basal and insulin-stimulated glycogen synthesis upon overexpression in hepatocytes. This chain is Protein phosphatase 1 regulatory subunit 3B (PPP1R3B), found in Bos taurus (Bovine).